The primary structure comprises 450 residues: Coiled-coil domain-containing protein 149-A (450 aa).

2 coiled-coil regions span residues 1 to 197 (MANQ…DRRK) and 259 to 286 (IQHQRQTNRILGNRVADLERKLKTLEIS). Positions 290–358 (SLPDDRTGRG…NGQVGTQLKE (69 aa)) are disordered. Over residues 343–354 (PSGTRTNGQVGT) the composition is skewed to polar residues.

It belongs to the CCDC149 family.

The polypeptide is Coiled-coil domain-containing protein 149-A (ccdc149a) (Danio rerio (Zebrafish)).